The chain runs to 616 residues: MPKLRSATSTQGRNMAGARALWRATGVKDSDFGKPIIAISNSFTQFVPGHVHLKDMGSLVAGAIEEAGGIAKEFNTIAVDDGIAMGHGGMLYSLPSRELIADSVEYMVNAHCADALVCISNCDKITPGMMMAALRLNIPVIFVSGGPMEAGKTKLSGDIIKLDLVDAMVAGADERVSDEDSEKIERSACPTCGSCSGMFTANSMNCLTEALGLSLPGNGSMLATHADRRELFLEAGRRIMDLATRYYKHDDESALPRNIANFNAFENAMTLDIAMGGSSNTVLHLLAGAQEAKVDFTMDDIDRLSRKVPHLCKVAPSTPKYHMEDVHRAGGVMGILGELDRAGLIHNDAYHVAGKNLKEVLAKWDIAQSQDEAVRKFFSAGPAGIPTTKAFSQDCRWDSVDDDREGGCIRKREFAFSQEGGLAVLSGNIALDGCIVKTAGVEEENHTFIGSARVYESQDDAVAGILGGEVVAGDVVVIRYEGPKGGPGMQEMLYPTSYLKSRGLGKACALITDGRFSGGTSGLSIGHVSPEAAAGGTIGLVETGDRIEIDIPARSIKLAISDVELAARRSAMESRGKQAWKPVDRIREVSLALKAYALLATSADKGAVRDVSKLED.

D81 contributes to the Mg(2+) binding site. Residue C122 participates in [2Fe-2S] cluster binding. Positions 123 and 124 each coordinate Mg(2+). N6-carboxylysine is present on K124. C195 is a binding site for [2Fe-2S] cluster. A Mg(2+)-binding site is contributed by E491. The active-site Proton acceptor is the S517.

It belongs to the IlvD/Edd family. Homodimer. The cofactor is [2Fe-2S] cluster. Mg(2+) serves as cofactor.

The catalysed reaction is (2R)-2,3-dihydroxy-3-methylbutanoate = 3-methyl-2-oxobutanoate + H2O. It carries out the reaction (2R,3R)-2,3-dihydroxy-3-methylpentanoate = (S)-3-methyl-2-oxopentanoate + H2O. The protein operates within amino-acid biosynthesis; L-isoleucine biosynthesis; L-isoleucine from 2-oxobutanoate: step 3/4. Its pathway is amino-acid biosynthesis; L-valine biosynthesis; L-valine from pyruvate: step 3/4. Functionally, functions in the biosynthesis of branched-chain amino acids. Catalyzes the dehydration of (2R,3R)-2,3-dihydroxy-3-methylpentanoate (2,3-dihydroxy-3-methylvalerate) into 2-oxo-3-methylpentanoate (2-oxo-3-methylvalerate) and of (2R)-2,3-dihydroxy-3-methylbutanoate (2,3-dihydroxyisovalerate) into 2-oxo-3-methylbutanoate (2-oxoisovalerate), the penultimate precursor to L-isoleucine and L-valine, respectively. The polypeptide is Dihydroxy-acid dehydratase (Shewanella woodyi (strain ATCC 51908 / MS32)).